The primary structure comprises 1040 residues: Tudor domain-containing protein 5 (1040 aa).

3 consecutive HTH OST-type domains span residues 7–80 (IQDC…KAIP), 122–197 (VPPI…LKKS), and 291–365 (VDPE…FDAD). Residues 533 to 592 (FIQPGHLCCVKISEDKWWYRVIIHRILGKKEVEVFYPDFGNIGTVQKSSLRFLKCCYTKL) enclose the Tudor domain. A Phosphoserine modification is found at S809. Disordered regions lie at residues 857-891 (DVKGGIHTPEGPIAQEKNTSTTRIQQQPDLQYPLD) and 912-975 (AERS…AKDK). Polar residues-rich tracts occupy residues 872 to 891 (EKNTSTTRIQQQPDLQYPLD) and 912 to 924 (AERSQSEPASIQT). Residue S943 is modified to Phosphoserine. The segment covering 946 to 956 (NHSGSVESSPG) has biased composition (polar residues). Over residues 958–975 (LKKEDVSNSRAEATAKDK) the composition is skewed to basic and acidic residues.

The protein belongs to the TDRD5 family. Gonad-specific. Mainly expressed in testis. Present at low level in ovary (at protein level).

The protein resides in the cytoplasm. Functionally, required during spermiogenesis to participate in the repression transposable elements and prevent their mobilization, which is essential for the germline integrity. Probably acts via the piRNA metabolic process, which mediates the repression of transposable elements during meiosis by forming complexes composed of piRNAs and Piwi proteins and govern the methylation and subsequent repression of transposons. Required for chromatoid body (CB) assembly. The sequence is that of Tudor domain-containing protein 5 (Tdrd5) from Mus musculus (Mouse).